The chain runs to 638 residues: Threonine--tRNA ligase (638 aa).

A TGS domain is found at 1 to 61 (MPEITLPDGS…DNDSKVVIIT (61 aa)). The segment at 242 to 533 (DHRKLGKKHS…LIEQYEAKFP (292 aa)) is catalytic. Residues C333, H384, and H510 each coordinate Zn(2+).

This sequence belongs to the class-II aminoacyl-tRNA synthetase family. Homodimer. The cofactor is Zn(2+).

It is found in the cytoplasm. The catalysed reaction is tRNA(Thr) + L-threonine + ATP = L-threonyl-tRNA(Thr) + AMP + diphosphate + H(+). Functionally, catalyzes the attachment of threonine to tRNA(Thr) in a two-step reaction: L-threonine is first activated by ATP to form Thr-AMP and then transferred to the acceptor end of tRNA(Thr). Also edits incorrectly charged L-seryl-tRNA(Thr). This is Threonine--tRNA ligase from Prochlorococcus marinus subsp. pastoris (strain CCMP1986 / NIES-2087 / MED4).